A 103-amino-acid chain; its full sequence is MTHFENASIQKTANVYFDGKCISHNLTLPDGSRKSVGVILPATLEFNTGAPEIMEVLAGQCRVTLADAPASQTYEAGQSFNVPGNSHFTIEVTDTLHYVCHFG.

The protein belongs to the nucleoside phosphorylase PpnP family.

It carries out the reaction a purine D-ribonucleoside + phosphate = a purine nucleobase + alpha-D-ribose 1-phosphate. The catalysed reaction is adenosine + phosphate = alpha-D-ribose 1-phosphate + adenine. The enzyme catalyses cytidine + phosphate = cytosine + alpha-D-ribose 1-phosphate. It catalyses the reaction guanosine + phosphate = alpha-D-ribose 1-phosphate + guanine. It carries out the reaction inosine + phosphate = alpha-D-ribose 1-phosphate + hypoxanthine. The catalysed reaction is thymidine + phosphate = 2-deoxy-alpha-D-ribose 1-phosphate + thymine. The enzyme catalyses uridine + phosphate = alpha-D-ribose 1-phosphate + uracil. It catalyses the reaction xanthosine + phosphate = alpha-D-ribose 1-phosphate + xanthine. In terms of biological role, catalyzes the phosphorolysis of diverse nucleosides, yielding D-ribose 1-phosphate and the respective free bases. Can use uridine, adenosine, guanosine, cytidine, thymidine, inosine and xanthosine as substrates. Also catalyzes the reverse reactions. The polypeptide is Pyrimidine/purine nucleoside phosphorylase (Laribacter hongkongensis (strain HLHK9)).